A 66-amino-acid chain; its full sequence is U1-theraphotoxin-Cg1a 2 (66 aa).

The first 21 residues, 1–21 (MKTSALFVIFGLVLLFCNSFA), serve as a signal peptide directing secretion. Positions 22–29 (AELEMTGR) are excised as a propeptide. 3 cysteine pairs are disulfide-bonded: C31–C46, C38–C51, and C45–C58. Proline amide is present on P63.

This sequence belongs to the neurotoxin 10 (Hwtx-1) family. 46 (Jztx-7/10/12) subfamily. Expressed by the venom gland.

The protein localises to the secreted. In terms of biological role, probable ion channel inhibitor. The chain is U1-theraphotoxin-Cg1a 2 from Chilobrachys guangxiensis (Chinese earth tiger tarantula).